Consider the following 752-residue polypeptide: Primary amine oxidase (752 aa).

The signal sequence occupies residues 1–27 (MAILSPRKTALALAVALSCAWQSPAFA). Residues 408-419 (YLDSGDYGMGTL) and 490-495 (VGNYDY) each bind substrate. The active-site Proton acceptor is Asp-410. Tyr-493 (schiff-base intermediate with substrate; via topaquinone) is an active-site residue. Tyr-493 bears the 2',4',5'-topaquinone mark. Cu cation contacts are provided by His-551 and His-553. Asp-560, Leu-561, Asp-562, Glu-600, Tyr-694, Asp-697, Glu-699, and Asp-705 together coordinate Ca(2+). Asp-560 contacts Mn(2+). Asp-562 lines the Mn(2+) pocket. A Mn(2+)-binding site is contributed by Asp-705. Residue His-716 coordinates Cu cation.

Belongs to the copper/topaquinone oxidase family. As to quaternary structure, homodimer. Cu cation serves as cofactor. The cofactor is Ca(2+). L-topaquinone is required as a cofactor. It depends on Mn(2+) as a cofactor. In terms of processing, topaquinone (TPQ) is generated by copper-dependent autoxidation of a specific tyrosyl residue.

The protein resides in the periplasm. The enzyme catalyses a primary methyl amine + O2 + H2O = an aldehyde + H2O2 + NH4(+). Active on tyramine, tryptamine, beta-phenethylamine and dopamine. The chain is Primary amine oxidase (maoA) from Klebsiella michiganensis (strain ATCC 8724 / DSM 4798 / JCM 20051 / NBRC 3318 / NRRL B-199 / KCTC 1686 / BUCSAV 143 / CCM 1901).